The primary structure comprises 122 residues: Small ribosomal subunit protein bS6 (122 aa).

A disordered region spans residues 95 to 122 (AETAPSPMMKEVQREEAKKAAAQSEQAA).

The protein belongs to the bacterial ribosomal protein bS6 family.

Binds together with bS18 to 16S ribosomal RNA. The polypeptide is Small ribosomal subunit protein bS6 (Ralstonia nicotianae (strain ATCC BAA-1114 / GMI1000) (Ralstonia solanacearum)).